A 221-amino-acid polypeptide reads, in one-letter code: Thiamine-phosphate synthase (221 aa).

Residues 44–48 (QFREK) and asparagine 79 each bind 4-amino-2-methyl-5-(diphosphooxymethyl)pyrimidine. Mg(2+) is bound by residues aspartate 80 and aspartate 99. Residue serine 117 coordinates 4-amino-2-methyl-5-(diphosphooxymethyl)pyrimidine. 143–145 (TSS) lines the 2-[(2R,5Z)-2-carboxy-4-methylthiazol-5(2H)-ylidene]ethyl phosphate pocket. Lysine 146 serves as a coordination point for 4-amino-2-methyl-5-(diphosphooxymethyl)pyrimidine. 2-[(2R,5Z)-2-carboxy-4-methylthiazol-5(2H)-ylidene]ethyl phosphate contacts are provided by residues glycine 175 and 195–196 (IS).

It belongs to the thiamine-phosphate synthase family. Mg(2+) serves as cofactor.

The catalysed reaction is 2-[(2R,5Z)-2-carboxy-4-methylthiazol-5(2H)-ylidene]ethyl phosphate + 4-amino-2-methyl-5-(diphosphooxymethyl)pyrimidine + 2 H(+) = thiamine phosphate + CO2 + diphosphate. It carries out the reaction 2-(2-carboxy-4-methylthiazol-5-yl)ethyl phosphate + 4-amino-2-methyl-5-(diphosphooxymethyl)pyrimidine + 2 H(+) = thiamine phosphate + CO2 + diphosphate. The enzyme catalyses 4-methyl-5-(2-phosphooxyethyl)-thiazole + 4-amino-2-methyl-5-(diphosphooxymethyl)pyrimidine + H(+) = thiamine phosphate + diphosphate. Its pathway is cofactor biosynthesis; thiamine diphosphate biosynthesis; thiamine phosphate from 4-amino-2-methyl-5-diphosphomethylpyrimidine and 4-methyl-5-(2-phosphoethyl)-thiazole: step 1/1. In terms of biological role, condenses 4-methyl-5-(beta-hydroxyethyl)thiazole monophosphate (THZ-P) and 2-methyl-4-amino-5-hydroxymethyl pyrimidine pyrophosphate (HMP-PP) to form thiamine monophosphate (TMP). This Geobacillus kaustophilus (strain HTA426) protein is Thiamine-phosphate synthase.